We begin with the raw amino-acid sequence, 337 residues long: D-alanine--D-alanine ligase (337 aa).

Residues 124-330 (KMWFSALGIP…FTEYLSLVIN (207 aa)) form the ATP-grasp domain. 154 to 209 (ALAQWGSIFVKAASQGSSVGCYKVDDSAKVAGVLKDAFGYAPYVIVEKTIKARELE) contacts ATP. The Mg(2+) site is built by Asp-284, Glu-297, and Asn-299.

The protein belongs to the D-alanine--D-alanine ligase family. Mg(2+) is required as a cofactor. The cofactor is Mn(2+).

Its subcellular location is the cytoplasm. It catalyses the reaction 2 D-alanine + ATP = D-alanyl-D-alanine + ADP + phosphate + H(+). It participates in cell wall biogenesis; peptidoglycan biosynthesis. Cell wall formation. The polypeptide is D-alanine--D-alanine ligase (Shewanella baltica (strain OS223)).